The sequence spans 288 residues: Acetyl-coenzyme A carboxylase carboxyl transferase subunit beta (288 aa).

The 255-residue stretch at 34–288 (LFAKCPACKH…HLVAFHGGGQ (255 aa)) folds into the CoA carboxyltransferase N-terminal domain. Residues cysteine 38, cysteine 41, cysteine 56, and cysteine 59 each contribute to the Zn(2+) site. The segment at 38–59 (CPACKHMIYKKDLGLAKICPTC) adopts a C4-type zinc-finger fold.

It belongs to the AccD/PCCB family. As to quaternary structure, acetyl-CoA carboxylase is a heterohexamer composed of biotin carboxyl carrier protein (AccB), biotin carboxylase (AccC) and two subunits each of ACCase subunit alpha (AccA) and ACCase subunit beta (AccD). The cofactor is Zn(2+).

Its subcellular location is the cytoplasm. It carries out the reaction N(6)-carboxybiotinyl-L-lysyl-[protein] + acetyl-CoA = N(6)-biotinyl-L-lysyl-[protein] + malonyl-CoA. Its pathway is lipid metabolism; malonyl-CoA biosynthesis; malonyl-CoA from acetyl-CoA: step 1/1. Component of the acetyl coenzyme A carboxylase (ACC) complex. Biotin carboxylase (BC) catalyzes the carboxylation of biotin on its carrier protein (BCCP) and then the CO(2) group is transferred by the transcarboxylase to acetyl-CoA to form malonyl-CoA. The chain is Acetyl-coenzyme A carboxylase carboxyl transferase subunit beta from Streptococcus pyogenes serotype M1.